The following is a 436-amino-acid chain: Trigger factor (436 aa).

The 86-residue stretch at 161-246 (DLRVNMDFVG…LNKVEKQDLP (86 aa)) folds into the PPIase FKBP-type domain.

Belongs to the FKBP-type PPIase family. Tig subfamily.

It localises to the cytoplasm. The enzyme catalyses [protein]-peptidylproline (omega=180) = [protein]-peptidylproline (omega=0). Functionally, involved in protein export. Acts as a chaperone by maintaining the newly synthesized protein in an open conformation. Functions as a peptidyl-prolyl cis-trans isomerase. This Tolumonas auensis (strain DSM 9187 / NBRC 110442 / TA 4) protein is Trigger factor.